The following is a 103-amino-acid chain: Probable protease inhibitor Egf0.4a (103 aa).

The first 22 residues, Met1–Thr22, serve as a signal peptide directing secretion. The 53-residue stretch at Cys35–Cys87 folds into the TIL domain.

Belongs to the polydnaviridae EGF-like motif protein family.

The polypeptide is Probable protease inhibitor Egf0.4a (O4) (Microplitis demolitor (Parasitoid wasp)).